Reading from the N-terminus, the 361-residue chain is Mannose-1-phosphate guanyltransferase (361 aa).

The residue at position 153 (Thr-153) is a Phosphothreonine. A Glycyl lysine isopeptide (Lys-Gly) (interchain with G-Cter in ubiquitin) cross-link involves residue Lys-244.

It belongs to the transferase hexapeptide repeat family.

Its subcellular location is the cytoplasm. The catalysed reaction is alpha-D-mannose 1-phosphate + GTP + H(+) = GDP-alpha-D-mannose + diphosphate. Its pathway is nucleotide-sugar biosynthesis; GDP-alpha-D-mannose biosynthesis; GDP-alpha-D-mannose from alpha-D-mannose 1-phosphate (GTP route): step 1/1. Functionally, involved in cell wall synthesis where it is required for glycosylation. Involved in cell cycle progression through cell-size checkpoint. The chain is Mannose-1-phosphate guanyltransferase (PSA1) from Saccharomyces cerevisiae (strain ATCC 204508 / S288c) (Baker's yeast).